We begin with the raw amino-acid sequence, 272 residues long: MQVTSRRRVTHLTAGQAIARPETLVVEEPLEIRVGGAAVTVTMRTPGSDFELAQGFLLTEGIIGAREDVHSIRYCAGCGEDGANSYNVLDVTLAAGLGRPELDVTRNFYTTSSCGVCGKASLEAVRSVSRFSPAADPATVAAATLQAMPHQLRSAQKVFDSTGGLHAAALFRADGTMLVVREDVGRHNAVDKVIGWALEQQRLPLRATVLLVSGRASFELAQKTVMAGIPVLAAVSAPSSLAVSLAEESGVTLVAFLREDSMNIYTRADRIG.

Cys-114 serves as the catalytic Cysteine persulfide intermediate.

This sequence belongs to the FdhD family.

It localises to the cytoplasm. In terms of biological role, required for formate dehydrogenase (FDH) activity. Acts as a sulfur carrier protein that transfers sulfur from IscS to the molybdenum cofactor prior to its insertion into FDH. The chain is Sulfur carrier protein FdhD from Mycolicibacterium paratuberculosis (strain ATCC BAA-968 / K-10) (Mycobacterium paratuberculosis).